The chain runs to 67 residues: Large ribosomal subunit protein eL24 (67 aa).

Cys7, Cys10, Cys33, and Cys37 together coordinate Zn(2+). The segment at 7–37 (CSYCGKPFEPGTGKMFVRNDGRVLFFCSRKC) adopts a C4-type zinc-finger fold.

The protein belongs to the eukaryotic ribosomal protein eL24 family. As to quaternary structure, part of the 50S ribosomal subunit. Forms a cluster with proteins L3 and L14. Zn(2+) is required as a cofactor.

Binds to the 23S rRNA. This Pyrococcus abyssi (strain GE5 / Orsay) protein is Large ribosomal subunit protein eL24.